A 278-amino-acid chain; its full sequence is Protoheme IX farnesyltransferase (278 aa).

The next 9 membrane-spanning stretches (helical) occupy residues 12–32 (VIWLLILSSVVGYIYAAQTVD), 33–53 (WSKLIALIAVATLAVGGSAAF), 83–103 (ALVYSLALSAAGITLSFYLLG), 105–125 (LPGLFVALGWFFYAVVYTIWL), 130–150 (WLNILGGGFAGNATFLGGYAL), 157–177 (LPAVLISFAIYLWIPSHIWAL), 204–224 (VIISILNIASAVYILWLYLAF), 228–248 (LLGLALVFAGVAGTVATSILA), and 257–277 (MWKMYKASSPILTLFLLALVF).

It belongs to the UbiA prenyltransferase family. Protoheme IX farnesyltransferase subfamily.

It localises to the cell membrane. The catalysed reaction is heme b + (2E,6E)-farnesyl diphosphate + H2O = Fe(II)-heme o + diphosphate. The protein operates within porphyrin-containing compound metabolism; heme O biosynthesis; heme O from protoheme: step 1/1. Functionally, converts heme B (protoheme IX) to heme O by substitution of the vinyl group on carbon 2 of heme B porphyrin ring with a hydroxyethyl farnesyl side group. The polypeptide is Protoheme IX farnesyltransferase (Pyrobaculum islandicum (strain DSM 4184 / JCM 9189 / GEO3)).